A 979-amino-acid polypeptide reads, in one-letter code: Translation initiation factor IF-2 (979 aa).

The tract at residues 68–386 is disordered; that stretch reads VKQKQGTPAS…DKRDAASRAA (319 aa). 3 stretches are compositionally biased toward basic and acidic residues: residues 102 to 179, 217 to 229, and 260 to 273; these read QDMR…KPEE, EMEK…EVFR, and TKED…DADG. Positions 317-326 are enriched in polar residues; it reads RPAQQQSNAS. The segment covering 347–356 has biased composition (basic and acidic residues); the sequence is DVQRQVKETL. The tr-type G domain maps to 478-646; that stretch reads ARPPIVTVMG…KVLLEADILE (169 aa). A G1 region spans residues 487 to 494; that stretch reads GHVDHGKT. 487–494 contacts GTP; the sequence is GHVDHGKT. The segment at 512–516 is G2; sequence GITQH. The tract at residues 534-537 is G3; sequence DTPG. GTP is bound by residues 534-538 and 588-591; these read DTPGH and NKID. The interval 588–591 is G4; the sequence is NKID. Residues 624-626 form a G5 region; it reads SAK.

The protein belongs to the TRAFAC class translation factor GTPase superfamily. Classic translation factor GTPase family. IF-2 subfamily.

It localises to the cytoplasm. Functionally, one of the essential components for the initiation of protein synthesis. Protects formylmethionyl-tRNA from spontaneous hydrolysis and promotes its binding to the 30S ribosomal subunits. Also involved in the hydrolysis of GTP during the formation of the 70S ribosomal complex. The chain is Translation initiation factor IF-2 from Porphyromonas gingivalis (strain ATCC BAA-308 / W83).